The following is a 438-amino-acid chain: 23S rRNA (uracil(1939)-C(5))-methyltransferase RlmD (438 aa).

The TRAM domain occupies 10-69; sequence KASVNTKHLSVDVVRLDHNGAGIAFVDKKPVFIEGALPGEKAIIQFIEQKKQFSRAKLIK. [4Fe-4S] cluster is bound by residues Cys-82, Cys-88, Cys-91, and Cys-169. S-adenosyl-L-methionine contacts are provided by Gln-272, Phe-301, Asn-306, Glu-322, Asn-349, and Asp-370. The active-site Nucleophile is Cys-396.

It belongs to the class I-like SAM-binding methyltransferase superfamily. RNA M5U methyltransferase family. RlmD subfamily.

The enzyme catalyses uridine(1939) in 23S rRNA + S-adenosyl-L-methionine = 5-methyluridine(1939) in 23S rRNA + S-adenosyl-L-homocysteine + H(+). In terms of biological role, catalyzes the formation of 5-methyl-uridine at position 1939 (m5U1939) in 23S rRNA. This is 23S rRNA (uracil(1939)-C(5))-methyltransferase RlmD from Aliivibrio fischeri (strain MJ11) (Vibrio fischeri).